Reading from the N-terminus, the 163-residue chain is Ribonuclease P protein subunit p25-like protein (163 aa).

Disordered regions lie at residues 1 to 22 (MEHYRKAGSVELPAPSPMPQLP) and 129 to 163 (NEYGYQPPGAPPDLGPTPASSCGPQPRRRARDTRF). Positions 154–163 (PRRRARDTRF) are enriched in basic residues.

The protein belongs to the histone-like Alba family.

The protein resides in the nucleus. May be a component of ribonuclease P or MRP. The protein is Ribonuclease P protein subunit p25-like protein (RPP25L) of Bos taurus (Bovine).